A 1070-amino-acid polypeptide reads, in one-letter code: DNA-directed RNA polymerase subunit beta (1070 aa).

It belongs to the RNA polymerase beta chain family. In terms of assembly, in plastids the minimal PEP RNA polymerase catalytic core is composed of four subunits: alpha, beta, beta', and beta''. When a (nuclear-encoded) sigma factor is associated with the core the holoenzyme is formed, which can initiate transcription.

The protein resides in the plastid. It is found in the chloroplast. It carries out the reaction RNA(n) + a ribonucleoside 5'-triphosphate = RNA(n+1) + diphosphate. Functionally, DNA-dependent RNA polymerase catalyzes the transcription of DNA into RNA using the four ribonucleoside triphosphates as substrates. This Solanum tuberosum (Potato) protein is DNA-directed RNA polymerase subunit beta.